The sequence spans 216 residues: ATP phosphoribosyltransferase (216 aa).

This sequence belongs to the ATP phosphoribosyltransferase family. Short subfamily. Heteromultimer composed of HisG and HisZ subunits.

The protein resides in the cytoplasm. It catalyses the reaction 1-(5-phospho-beta-D-ribosyl)-ATP + diphosphate = 5-phospho-alpha-D-ribose 1-diphosphate + ATP. The protein operates within amino-acid biosynthesis; L-histidine biosynthesis; L-histidine from 5-phospho-alpha-D-ribose 1-diphosphate: step 1/9. Its function is as follows. Catalyzes the condensation of ATP and 5-phosphoribose 1-diphosphate to form N'-(5'-phosphoribosyl)-ATP (PR-ATP). Has a crucial role in the pathway because the rate of histidine biosynthesis seems to be controlled primarily by regulation of HisG enzymatic activity. The chain is ATP phosphoribosyltransferase from Prochlorococcus marinus (strain MIT 9211).